We begin with the raw amino-acid sequence, 41 residues long: Large ribosomal subunit protein bL36 (41 aa).

It belongs to the bacterial ribosomal protein bL36 family.

The protein is Large ribosomal subunit protein bL36 of Sinorhizobium fredii (strain NBRC 101917 / NGR234).